Reading from the N-terminus, the 134-residue chain is MSLIRLGLALLLLLATVSQLLQPVQGRRKMCGEALIQALDVICVNGFTRRVRRSSASKDARVRDLIRKLQQPDEDIEQETETGRLKQKHTDADTEKGVPPAVGSGRKLRRHRRRIAHECCKEGCTYDDILDYCA.

Residues 1–26 (MSLIRLGLALLLLLATVSQLLQPVQG) form the signal peptide. 3 disulfide bridges follow: Cys-31-Cys-120, Cys-43-Cys-133, and Cys-119-Cys-124. The propeptide at 54-108 (SSASKDARVRDLIRKLQQPDEDIEQETETGRLKQKHTDADTEKGVPPAVGSGRKL) is connecting peptide. The segment at 72–107 (PDEDIEQETETGRLKQKHTDADTEKGVPPAVGSGRK) is disordered. Residues 81 to 96 (ETGRLKQKHTDADTEK) show a composition bias toward basic and acidic residues.

The protein belongs to the insulin family. Heterodimer of a B chain and an A chain linked by two disulfide bonds. As to expression, expressed at a high level in the embryonic mesoderm, with expression continuing after gastrulation and reducing from stage 12 onwards. Highly expressed in the embryonic anterior midgut rudiment and larval midgut.

It localises to the secreted. In terms of biological role, possible ligand of InR/insulin-like receptor. The sequence is that of Insulin-like peptide 4 from Drosophila melanogaster (Fruit fly).